The chain runs to 73 residues: Cx9C motif-containing protein 4, mitochondrial (73 aa).

Positions 2-44 (SNPCQKEACAIQDCLLSHQYDDAKCAKVIDQLYICCSKFYKDN) constitute a CHCH domain. 2 short sequence motifs (cx9C motif) span residues 5-15 (CQKEACAIQDC) and 26-36 (CAKVIDQLYIC). Disulfide bonds link C5–C36 and C15–C26.

This sequence belongs to the CMC4 family.

It localises to the mitochondrion intermembrane space. In Saccharomyces cerevisiae (strain RM11-1a) (Baker's yeast), this protein is Cx9C motif-containing protein 4, mitochondrial (CMC4).